Consider the following 313-residue polypeptide: Secretory carrier-associated membrane protein 4 (313 aa).

The disordered stretch occupies residues 1–69 (MAGRSRYDNP…LPPEPADFYN (69 aa)). Topologically, residues 1–148 (MAGRSRYDNP…EIPVHLQRTQ (148 aa)) are cytoplasmic. A coiled-coil region spans residues 85 to 116 (MKTREKELLAKEAELNRREKEIKRREEAAARA). 4 consecutive transmembrane segments (helical) span residues 149–169 (YVAF…IICV), 181–201 (IWFL…YLWY), 216–236 (FGWF…AAVS), and 255–275 (LIGN…MFCL). The Cytoplasmic portion of the chain corresponds to 276–313 (ESLLSMWVIQRVYLYFRGSGKEAEMKREAARSAARAAF).

This sequence belongs to the SCAMP family.

It is found in the cell membrane. It localises to the cytoplasmic vesicle. The protein resides in the secretory vesicle membrane. Its function is as follows. Probably involved in membrane trafficking. The chain is Secretory carrier-associated membrane protein 4 (SCAMP4) from Oryza sativa subsp. japonica (Rice).